The primary structure comprises 679 residues: FAST kinase domain-containing protein 2, mitochondrial (679 aa).

Residues Ser-113 and Ser-126 each carry the phosphoserine modification. The RAP domain maps to 607-664 (VAVLCVPKSAYCLNSNHLRGLMAMKIRHLNVMGFHVILIHNWELKKLKMEDAVTFVRK).

Belongs to the FAST kinase family. Monomer. Found in a complex with GRSF1, DDX28, DHX30 and FASTKD5. Associates with the 16S mitochondrial rRNA (16S mt-rRNA). Forms a regulatory protein-RNA complex, consisting of RCC1L, NGRN, RPUSD3, RPUSD4, TRUB2, FASTKD2 and 16S mt-rRNA.

Its subcellular location is the mitochondrion matrix. It localises to the mitochondrion nucleoid. Its function is as follows. Plays an important role in assembly of the mitochondrial large ribosomal subunit. As a component of a functional protein-RNA module, consisting of RCC1L, NGRN, RPUSD3, RPUSD4, TRUB2, FASTKD2 and 16S mitochondrial ribosomal RNA (16S mt-rRNA), controls 16S mt-rRNA abundance and is required for intra-mitochondrial translation. May play a role in mitochondrial apoptosis. The sequence is that of FAST kinase domain-containing protein 2, mitochondrial (Fastkd2) from Rattus norvegicus (Rat).